The following is a 427-amino-acid chain: Serine--tRNA ligase (427 aa).

Thr-231 to Glu-233 is a binding site for L-serine. Arg-262–Glu-264 provides a ligand contact to ATP. Glu-285 contributes to the L-serine binding site. Glu-349 to Ser-352 is an ATP binding site. Ser-385 is a binding site for L-serine.

The protein belongs to the class-II aminoacyl-tRNA synthetase family. Type-1 seryl-tRNA synthetase subfamily. Homodimer. The tRNA molecule binds across the dimer.

The protein localises to the cytoplasm. It carries out the reaction tRNA(Ser) + L-serine + ATP = L-seryl-tRNA(Ser) + AMP + diphosphate + H(+). The catalysed reaction is tRNA(Sec) + L-serine + ATP = L-seryl-tRNA(Sec) + AMP + diphosphate + H(+). It participates in aminoacyl-tRNA biosynthesis; selenocysteinyl-tRNA(Sec) biosynthesis; L-seryl-tRNA(Sec) from L-serine and tRNA(Sec): step 1/1. Its function is as follows. Catalyzes the attachment of serine to tRNA(Ser). Is also able to aminoacylate tRNA(Sec) with serine, to form the misacylated tRNA L-seryl-tRNA(Sec), which will be further converted into selenocysteinyl-tRNA(Sec). The protein is Serine--tRNA ligase of Exiguobacterium sp. (strain ATCC BAA-1283 / AT1b).